The primary structure comprises 170 residues: Acetyl-CoA decarbonylase/synthase complex subunit epsilon 1 (170 aa).

This sequence belongs to the CdhB family. In terms of assembly, heterotetramer of two alpha and two epsilon subunits. The ACDS complex is made up of alpha, epsilon, beta, gamma and delta subunits with a probable stoichiometry of (alpha(2)epsilon(2))(4)-beta(8)-(gamma(1)delta(1))(8).

It functions in the pathway one-carbon metabolism; methanogenesis from acetate. Part of a complex that catalyzes the reversible cleavage of acetyl-CoA, allowing growth on acetate as sole source of carbon and energy. The alpha-epsilon subcomponent functions as a carbon monoxide dehydrogenase. The precise role of the epsilon subunit is unclear; it may have a stabilizing role within the alpha(2)epsilon(2) component and/or be involved in electron transfer to FAD during a potential FAD-mediated CO oxidation. This chain is Acetyl-CoA decarbonylase/synthase complex subunit epsilon 1, found in Methanosarcina barkeri (strain Fusaro / DSM 804).